The sequence spans 333 residues: MEVTNTSSIMWFFRDKGFDDPSIDKMLRKCKQLEKAQSDVASENWDYLSNIVGIQERKLPYIVSRCPKILTLRLDERLIPMVECLSSLGRNPREVASAITKFPPILSHSVEEKLCPLLAFFQALGVPETQLGKMILFNPRLISYSIDTKLTVIVSFLASLGLDQDGMIGKVLVKNPFLMGYSVDKRLRPTTEFLKSSVGLSEDGIKSVVMNFPQLLCRDVNKILKPNYDYLKECGFGDSQIATMVTGYPQILIKSVKNSLQPRIRFLVQVMGRGMDEVASYPEFFHHGLKKKVESRFKLVKKNNIDCSLREMLDCNTKKFHEKFGFSEVTASF.

This sequence belongs to the mTERF family.

Its subcellular location is the plastid. It is found in the chloroplast. It localises to the mitochondrion. In terms of biological role, transcription termination factor essential for chloroplast development. Required for maturation of 16S rRNA, 18S rRNA and 23S rRNA in the chloroplast. Binds to a specific region within the tRNA(Ile)(GAU) gene at a position adjacent to and downstream of the 16S rRNA gene. Required for the maturation of tRNA(Ile)(GAU). Binds to double-stranded DNA. The protein is Transcription termination factor MTERF6, chloroplastic/mitochondrial of Arabidopsis thaliana (Mouse-ear cress).